The following is a 198-amino-acid chain: Recombination protein RecR (198 aa).

The C4-type zinc finger occupies 57 to 72; the sequence is CSVCGHITDQDPCYIC. A Toprim domain is found at 80–175; that stretch reads SVICVVQDPK…KLSRIAHGLP (96 aa).

It belongs to the RecR family.

Its function is as follows. May play a role in DNA repair. It seems to be involved in an RecBC-independent recombinational process of DNA repair. It may act with RecF and RecO. The sequence is that of Recombination protein RecR from Bacillus licheniformis (strain ATCC 14580 / DSM 13 / JCM 2505 / CCUG 7422 / NBRC 12200 / NCIMB 9375 / NCTC 10341 / NRRL NRS-1264 / Gibson 46).